The following is a 76-amino-acid chain: UPF0729 protein C18orf32 homolog (76 aa).

Positions 1-37 (MVCIPCIVIPVLLWVYKKFLEPYIYPLISPFVSRMWP) are necessary for its localzation to the endoplasmic reticulum and lipid droplets. A compositionally biased stretch (basic and acidic residues) spans 47-56 (KNKGKVDYKG). A disordered region spans residues 47–76 (KNKGKVDYKGADINGLPTRGPTEMCDKKKD).

It belongs to the UPF0729 family. Interacts with DERL1 and AMFR. Post-translationally, undergoes ER-associated degradation (ERAD).

The protein localises to the endoplasmic reticulum. It localises to the lipid droplet. Its function is as follows. May activate the NF-kappa-B signaling pathway. In Bos taurus (Bovine), this protein is UPF0729 protein C18orf32 homolog.